A 125-amino-acid polypeptide reads, in one-letter code: Fluoride-specific ion channel FluC (125 aa).

2 consecutive transmembrane segments (helical) span residues 4 to 24 and 34 to 54; these read LWVA…GVWI and YGTF…LTVL. The Na(+) site is built by G74 and T77. Residues 99 to 119 form a helical membrane-spanning segment; that stretch reads VLYFGSSLALGILAVWLGMVV.

The protein belongs to the fluoride channel Fluc/FEX (TC 1.A.43) family.

Its subcellular location is the cell inner membrane. It carries out the reaction fluoride(in) = fluoride(out). Na(+) is not transported, but it plays an essential structural role and its presence is essential for fluoride channel function. Fluoride-specific ion channel. Important for reducing fluoride concentration in the cell, thus reducing its toxicity. The sequence is that of Fluoride-specific ion channel FluC from Acidobacterium capsulatum (strain ATCC 51196 / DSM 11244 / BCRC 80197 / JCM 7670 / NBRC 15755 / NCIMB 13165 / 161).